Consider the following 230-residue polypeptide: MPPHFLSADSTGQPHRHADRPKRVRTPGEPLRIGVGGPVGSGKTALVAALCRQLRDELSLAVLTNDIYTTEDADFLRRHAVLPDDRIAAVQTGGCPHTAIRDDITANLDAIDDLVAGHDHLDLILVESGGDNLTATFSSGLVDVQIFVVDVAGGDKVPRKGGPGVTFSDLLVINKTDLAPMVGADLDVMRRDSTKVRGERPFVLISLTADPTAGPVLDWVRAQLRVPVQG.

Residues 1–31 (MPPHFLSADSTGQPHRHADRPKRVRTPGEPL) are disordered. A compositionally biased stretch (basic residues) spans 14–25 (PHRHADRPKRVR). Position 37-44 (37-44 (GPVGSGKT)) interacts with GTP.

It belongs to the SIMIBI class G3E GTPase family. UreG subfamily. As to quaternary structure, homodimer. UreD, UreF and UreG form a complex that acts as a GTP-hydrolysis-dependent molecular chaperone, activating the urease apoprotein by helping to assemble the nickel containing metallocenter of UreC. The UreE protein probably delivers the nickel.

The protein resides in the cytoplasm. In terms of biological role, facilitates the functional incorporation of the urease nickel metallocenter. This process requires GTP hydrolysis, probably effectuated by UreG. This is Urease accessory protein UreG from Mycobacterium sp. (strain JLS).